We begin with the raw amino-acid sequence, 338 residues long: D-erythrose-4-phosphate dehydrogenase (338 aa).

Residue 11–12 (RI) participates in NAD(+) binding. Residues 153-155 (SCT), Arg199, 212-213 (TK), and Arg235 contribute to the substrate site. Residue Cys154 is the Nucleophile of the active site. Asn317 lines the NAD(+) pocket.

The protein belongs to the glyceraldehyde-3-phosphate dehydrogenase family. Epd subfamily. Homotetramer.

Its subcellular location is the cytoplasm. It carries out the reaction D-erythrose 4-phosphate + NAD(+) + H2O = 4-phospho-D-erythronate + NADH + 2 H(+). It participates in cofactor biosynthesis; pyridoxine 5'-phosphate biosynthesis; pyridoxine 5'-phosphate from D-erythrose 4-phosphate: step 1/5. Its function is as follows. Catalyzes the NAD-dependent conversion of D-erythrose 4-phosphate to 4-phosphoerythronate. The protein is D-erythrose-4-phosphate dehydrogenase of Shewanella loihica (strain ATCC BAA-1088 / PV-4).